The primary structure comprises 137 residues: Basic phospholipase A2 homolog MT1 (137 aa).

The N-terminal stretch at 1 to 16 (MRTLWIVALLLVGVEG) is a signal peptide. 7 disulfides stabilise this stretch: Cys-42–Cys-131, Cys-44–Cys-60, Cys-59–Cys-111, Cys-65–Cys-137, Cys-66–Cys-104, Cys-73–Cys-97, and Cys-91–Cys-102. Positions 121 to 133 (KKYKAYFKFKCKK) are important for membrane-damaging activities in eukaryotes and bacteria; heparin-binding.

This sequence belongs to the phospholipase A2 family. Group II subfamily. K49 sub-subfamily. As to quaternary structure, binds to heparin. Expressed by the venom gland.

The protein localises to the secreted. Heparin and wedelolactone inhibit the myotoxic activity. The PLA2 inhibitor, para-bromophenacyl bromide (BPB), inhibits the myotoxic activity. Its function is as follows. Snake venom phospholipase A2 homolog that lacks enzymatic activity. Has myotoxic activities. A model of myotoxic mechanism has been proposed: an apo Lys49-PLA2 is activated by the entrance of a hydrophobic molecule (e.g. fatty acid) at the hydrophobic channel of the protein leading to a reorientation of a monomer. This reorientation causes a transition between 'inactive' to 'active' states, causing alignment of C-terminal and membrane-docking sites (MDoS) side-by-side and putting the membrane-disruption sites (MDiS) in the same plane, exposed to solvent and in a symmetric position for both monomers. The MDoS region stabilizes the toxin on membrane by the interaction of charged residues with phospholipid head groups. Subsequently, the MDiS region destabilizes the membrane with penetration of hydrophobic residues. This insertion causes a disorganization of the membrane, allowing an uncontrolled influx of ions (i.e. calcium and sodium), and eventually triggering irreversible intracellular alterations and cell death. This chain is Basic phospholipase A2 homolog MT1, found in Agkistrodon contortrix laticinctus (Broad-banded copperhead).